A 221-amino-acid polypeptide reads, in one-letter code: Immunoregulatory peptides (221 aa).

An N-terminal signal peptide occupies residues methionine 1–glycine 19. Positions glutamate 20 to arginine 45 are excised as a propeptide. A disordered region spans residues lysine 21–arginine 155. Polar residues predominate over residues aspartate 25–serine 34. A compositionally biased stretch (low complexity) spans proline 48 to threonine 69. 2 stretches are compositionally biased toward polar residues: residues valine 70–lysine 85 and asparagine 123–glutamate 133. Residues glutamate 191 to serine 221 constitute a propeptide that is removed on maturation.

Salivary glands.

The protein resides in the secreted. Functionally, suppress host inflammatory response. Exerts significant anti-inflammatory functions, either by directly inhibiting host secretion of inflammatory factors such as tumor necrosis factor-alpha (TNF), monocyte chemotactic protein-1 (CCL2), and interferon-gamma (IFNG) or by indirectly increasing the secretion of immunosuppressant cytokine of interleukin-10 (IL10). Also potently scavenges free radical in vitro in a rapid manner. All tested concentrations of this peptide have little effect on the cell viability. In vivo, inhibits hind paw adjuvant-induced inflammation in mouse in a dose-dependent manner. Suppress host inflammatory response. Exerts significant anti-inflammatory functions, either by directly inhibiting host secretion of inflammatory factors such as tumor necrosis factor-alpha (TNF), monocyte chemotactic protein-1 (CCL2), and interferon-gamma (IFNG) or by indirectly increasing the secretion of immunosuppressant cytokine of interleukin-10 (IL10). Also potently scavenges free radical in vitro in a rapid manner. Low concentrations of this peptide have little effect on the cell viability, whereas high concentrations increase the cell viability by 10-20%. In vivo, inhibits hind paw adjuvant-induced inflammation in mouse in a dose-dependent manner. Its function is as follows. Not studied but probably similar to Hyalomin-B1. The polypeptide is Immunoregulatory peptides (Hyalomma asiaticum asiaticum (Tick)).